The sequence spans 36 residues: Photosystem I reaction center subunit VIII (36 aa).

The helical transmembrane segment at 6-28 threads the bilayer; that stretch reads LPSIFVPXVGLVFPAIAMASXFL.

This sequence belongs to the PsaI family.

The protein resides in the plastid. It localises to the chloroplast thylakoid membrane. Its function is as follows. May help in the organization of the PsaL subunit. The sequence is that of Photosystem I reaction center subunit VIII from Acorus gramineus (Dwarf sweet flag).